Consider the following 700-residue polypeptide: MDQIDISCIPTTPGVYLYKDPAGKVVYVGKAKHLRRRVASYFRDIQRHTPKTRAMLRSAATVETLSTTTEKEALLLEASLIKKHRPRYNILLRDDKQYVLFQLTRKHHWPRLVLTRKVRKDGSAYFGPFTSGQAARQTWKVIHKVFPLRRCSDKAFRNRVRPCLYHFMNQCPGPCVLDVDRDGYMQMVRKVEMLLAGRSTELIDMLRADMQAASDALEFEEAALLRDQLQAVERTVERQAAVLPGVHDMDAVGLAEAGGGLALSVLFIRRSVLLDKRNFFWSGLTLEEGPEVLLSFLTQYYGPGSFIPPRILVPWDIRTEDREGAELAPAAVCTDAGLLPDTPLLPDCPEAAPLPAAPVFAVSAGDVMPSGHDADPAGTADAPVVRGDSAPEQPLPAAVPPLCAEESASGSALRAVAEMLTELRGGPVRVLPPRNATDNQLVTMATENAREDARAEKRPDVAGVIAAKLGMSAPPVRIEAVDVSHTGGSNTRVGVVVFENGTPARDQYRTYAFADDEAGGDDTGVLALWAVRRVHSGPPWPDLLLVDGGRGQLAAVMTALESAGAGGLFAVASIAKARNEETGRADRRAGNLADRIFLPGRSNPVNFKSGSPELLFLQHVRDTVHDYAIGRHRRARSGAALSGELQRMQGIGPATARLLWEHFSSLQEMVDAGEKGLAALPGIGKAKAAVIHEGLKRLVG.

Residues 11–90 (TTPGVYLYKD…IKKHRPRYNI (80 aa)) form the GIY-YIG domain. Residues 200 to 235 (TELIDMLRADMQAASDALEFEEAALLRDQLQAVERT) form the UVR domain.

It belongs to the UvrC family. In terms of assembly, interacts with UvrB in an incision complex.

Its subcellular location is the cytoplasm. The UvrABC repair system catalyzes the recognition and processing of DNA lesions. UvrC both incises the 5' and 3' sides of the lesion. The N-terminal half is responsible for the 3' incision and the C-terminal half is responsible for the 5' incision. The polypeptide is UvrABC system protein C (Oleidesulfovibrio alaskensis (strain ATCC BAA-1058 / DSM 17464 / G20) (Desulfovibrio alaskensis)).